We begin with the raw amino-acid sequence, 154 residues long: PTTG1IP family member 2 (154 aa).

Positions 1–26 (MCWLRAWGQILLPVFLSLFLIQLLIS) are cleaved as a signal peptide. Residues 27-97 (FSENGFIHSP…SIYWLNCKVD (71 aa)) are Extracellular-facing. A helical transmembrane segment spans residues 98–118 (MFGIMMLLLIAVLITGFVWYC). The Cytoplasmic segment spans residues 119–154 (CAYHFYLQDLNRNRVYFYGRRETVPIHDRSATVYDE).

Its subcellular location is the membrane. This is PTTG1IP family member 2 from Homo sapiens (Human).